We begin with the raw amino-acid sequence, 60 residues long: Large ribosomal subunit protein bL32 (60 aa).

The protein belongs to the bacterial ribosomal protein bL32 family.

The sequence is that of Large ribosomal subunit protein bL32 from Desulfovibrio desulfuricans (strain ATCC 27774 / DSM 6949 / MB).